A 471-amino-acid chain; its full sequence is tRNA modification GTPase MnmE (471 aa).

Residues Arg-26, Glu-83, and Lys-136 each contribute to the (6S)-5-formyl-5,6,7,8-tetrahydrofolate site. The TrmE-type G domain occupies 232-393; that stretch reads GLRVVLAGQP…LRRRLLQLAG (162 aa). Asn-242 is a binding site for K(+). GTP-binding positions include 242 to 247, 261 to 267, 286 to 289, 354 to 357, and 374 to 376; these read NVGKSS, TPIAGTT, DTAG, NKAD, and SAR. Ser-246 is a binding site for Mg(2+). Positions 261, 263, and 266 each coordinate K(+). Mg(2+) is bound at residue Thr-267. Lys-471 lines the (6S)-5-formyl-5,6,7,8-tetrahydrofolate pocket.

This sequence belongs to the TRAFAC class TrmE-Era-EngA-EngB-Septin-like GTPase superfamily. TrmE GTPase family. Homodimer. Heterotetramer of two MnmE and two MnmG subunits. K(+) serves as cofactor.

It localises to the cytoplasm. Its function is as follows. Exhibits a very high intrinsic GTPase hydrolysis rate. Involved in the addition of a carboxymethylaminomethyl (cmnm) group at the wobble position (U34) of certain tRNAs, forming tRNA-cmnm(5)s(2)U34. This Methylibium petroleiphilum (strain ATCC BAA-1232 / LMG 22953 / PM1) protein is tRNA modification GTPase MnmE.